The sequence spans 564 residues: Alpha-amylase 3 (564 aa).

The first 21 residues, 1-21 (MFGVYFVLLFLSSALIHVANA), serve as a signal peptide directing secretion. Cysteines 51 and 59 form a disulfide. Substrate contacts are provided by Asn-56 and Trp-105. Ca(2+) is bound at residue Asn-143. Cys-172 and Cys-188 are disulfide-bonded. Asn-181 carries an N-linked (GlcNAc...) asparagine glycan. Asp-198 is a binding site for Ca(2+). Arg-227 contributes to the substrate binding site. Ca(2+) is bound at residue Asp-229. Asp-229 acts as the Nucleophile in catalysis. 232–233 (KM) contributes to the substrate binding site. A glycan (N-linked (GlcNAc...) asparagine) is linked at Asn-235. Ca(2+) is bound at residue Glu-253. Residue Glu-253 is the Proton donor of the active site. Cys-263 and Cys-306 form a disulfide bridge. Residues Asn-282 and Asn-305 are each glycosylated (N-linked (GlcNAc...) asparagine). 2 residues coordinate substrate: Asp-322 and Arg-369. Residues Asn-438, Asn-447, and Asn-498 are each glycosylated (N-linked (GlcNAc...) asparagine). The GPI-anchor amidated serine moiety is linked to residue Ser-538. The propeptide at 539-564 (SSRLILSFKTLVFGLGVTAMLFVLFF) is removed in mature form.

The protein belongs to the glycosyl hydrolase 13 family. It depends on Ca(2+) as a cofactor. Post-translationally, N-glycosylated.

The protein resides in the cell membrane. The enzyme catalyses Endohydrolysis of (1-&gt;4)-alpha-D-glucosidic linkages in polysaccharides containing three or more (1-&gt;4)-alpha-linked D-glucose units.. In terms of biological role, has a role in cell wall biosynthesis where it is involved in maintaining cell wall strength and shape. This Schizosaccharomyces pombe (strain 972 / ATCC 24843) (Fission yeast) protein is Alpha-amylase 3 (aah3).